Reading from the N-terminus, the 225-residue chain is Ribonuclease HII (225 aa).

In terms of domain architecture, RNase H type-2 spans 35-225; sequence GLVAGVDEVG…SFRPCQISPD (191 aa). 3 residues coordinate a divalent metal cation: aspartate 41, glutamate 42, and aspartate 137.

The protein belongs to the RNase HII family. Requires Mn(2+) as cofactor. The cofactor is Mg(2+).

The protein resides in the cytoplasm. It catalyses the reaction Endonucleolytic cleavage to 5'-phosphomonoester.. In terms of biological role, endonuclease that specifically degrades the RNA of RNA-DNA hybrids. In Nostoc sp. (strain PCC 7120 / SAG 25.82 / UTEX 2576), this protein is Ribonuclease HII.